The sequence spans 1455 residues: MELPKEMEEYFEMLQREIDKAYEIAKKARAQGKDPSLDVEIPQATDMAGRVESLVGPPGVAKRIRELVKEYGKEIAALKIVDEIIEGKFGDLGSREKYAEQAVRTALAILTEGIVSAPIEGIANVKIKRNTWADNSEYLALYYAGPIRSSGGTAQALSVLVGDYVRRKLGLDRFKPSEKHIERMVEEVDLYHRAVTRLQYHPSPEEVRLAMRNIPIEITGEATDDVEVSHRDVPGVETNQLRGGAILVLAEGVLQKAKKLVKYIDKMGIEGWEWLKEFVEAKEKGEPKEEGKEESLAESTLEETKVEVDMGFYYSLYQKFKEEIAPSDKYAKEVIGGRPLFSDPSKPGGFRLRYGRSRASGFATWGINPATMILVDEFLAIGTQLKTERPGKGAVVTPVTTIEGPIVKLKDGSVLRVDDYNLALKVREDVEEILYLGDAVIAFGDFVENNQTLLPANYCEEWWILEFVKALKEIYEVHLEPFTENEEESIEEASDYLEIDPEFLKEMLRDPLRVKPPVELAIHFSEVLGIPLHPYYTLYWNSVEPKDVEKLWRLLKNYAEIEWSNFRGIKFAKKIVISQEKLGDSKRTLELLGLPHTVRDGNVIVDYPWAAALLTPLGNLNWEFMAKPLYATIDIINENNEIKLRDRGISWIGARMGRPEKAKERKMKPPVQVLFPIGLAGGSSRDIKKAAEEGKVAEVEIAFFKCPKCGHVGPEHLCPNCGTRKELLWVCPRCNAEYPESQAEGYNYTCPKCNVKLRPYAKRKIRPSELLNRAMENVKVYGVDKLKGVMGMTSGWKMPEPLEKGLLRAKNDVYVFKDGTIRFDATDAPITHFRPREIGVSVEKLRELGYTHDFEGKPLVSEDQIVELKPQDIILSKEAGRYLLKVAKFVDDLLEKFYGLPRFYNAEKMEDLIGHLVIGLAPHTSAGIVGRIIGFVDALVGYAHPYFHAAKRRNCFPGDTRILVQIDGVPQKITLRELYELFEDERYENMVYVRKKPKREIKVYSIDLETGKVVLTDIEDVIKAPATDHLIRFELEDGRSFETTVDHPVLVYENGRFIEKRAFEVKEGDKVLVSELELVEQSSSSQDNPKNENLGSPEHDQLLEIKNIKYVRANDDFVFSLNAKKYHNVIINENIVTHQCDGDEDAVMLLLDALLNFSRYYLPEKRGGKMDAPLVITTRLDPREVDSEVHNMDIVRYYPLEFYEATYELKSPKELVGVIERVEDRLGKPEMYYGLKFTHDTDDIALGPKMSLYKQLGDMEEKVRRQLEVAKRIRAVDEHGVAEKILNSHLIPDLRGNLRSFTRQEFRCVKCNTKFRRPPLNGKCPVCGGKIVLTVSKGAIEKYLGTAKMLVTEYNVKNYTRQRICLTERDIDSLFENVFPETQLTLIVNPNDICQRLVMARTGEVNKSGLLENLSNGSKKTEKAEKAEKPRKKSDEKPKKKRVISLEEFFSRKSK.

The segment at 1409–1440 (GLLENLSNGSKKTEKAEKAEKPRKKSDEKPKK) is disordered. Basic and acidic residues predominate over residues 1419 to 1438 (KKTEKAEKAEKPRKKSDEKP).

Belongs to the archaeal DNA polymerase II family. As to quaternary structure, heterodimer of a large subunit and a small subunit. In terms of processing, this protein undergoes a protein self splicing that involves a post-translational excision of the intervening region (intein) followed by peptide ligation.

It catalyses the reaction DNA(n) + a 2'-deoxyribonucleoside 5'-triphosphate = DNA(n+1) + diphosphate. It carries out the reaction Exonucleolytic cleavage in the 3'- to 5'-direction to yield nucleoside 5'-phosphates.. Its function is as follows. Possesses two activities: a DNA synthesis (polymerase) and an exonucleolytic activity that degrades single-stranded DNA in the 3'- to 5'-direction. Has a template-primer preference which is characteristic of a replicative DNA polymerase. In Pyrococcus abyssi (strain GE5 / Orsay), this protein is DNA polymerase II large subunit (polC).